The chain runs to 464 residues: Fumarate hydratase class II (464 aa).

Substrate-binding positions include 96 to 98 (SGT), 127 to 130 (HPND), 137 to 139 (SSN), and threonine 185. Histidine 186 (proton donor/acceptor) is an active-site residue. Serine 316 is a catalytic residue. Residues serine 317 and 322 to 324 (KVN) contribute to the substrate site.

The protein belongs to the class-II fumarase/aspartase family. Fumarase subfamily. Homotetramer.

The protein resides in the cytoplasm. The enzyme catalyses (S)-malate = fumarate + H2O. Its pathway is carbohydrate metabolism; tricarboxylic acid cycle; (S)-malate from fumarate: step 1/1. In terms of biological role, involved in the TCA cycle. Catalyzes the stereospecific interconversion of fumarate to L-malate. In Pseudomonas syringae pv. tomato (strain ATCC BAA-871 / DC3000), this protein is Fumarate hydratase class II.